Here is a 1377-residue protein sequence, read N- to C-terminus: DNA-directed RNA polymerase subunit beta' (1377 aa).

4 residues coordinate Zn(2+): Cys60, Cys62, Cys75, and Cys78. Mg(2+)-binding residues include Asp449, Asp451, and Asp453. Residues Cys777, Cys851, Cys858, and Cys861 each contribute to the Zn(2+) site.

It belongs to the RNA polymerase beta' chain family. The RNAP catalytic core consists of 2 alpha, 1 beta, 1 beta' and 1 omega subunit. When a sigma factor is associated with the core the holoenzyme is formed, which can initiate transcription. Requires Mg(2+) as cofactor. Zn(2+) serves as cofactor.

It carries out the reaction RNA(n) + a ribonucleoside 5'-triphosphate = RNA(n+1) + diphosphate. DNA-dependent RNA polymerase catalyzes the transcription of DNA into RNA using the four ribonucleoside triphosphates as substrates. The polypeptide is DNA-directed RNA polymerase subunit beta' (Borrelia recurrentis (strain A1)).